The chain runs to 411 residues: 2-acylphloroglucinol 4-prenyltransferase, chloroplastic (411 aa).

Residues 1–91 (MELSSVSSFS…CNDQRGNSIR (91 aa)) constitute a chloroplast transit peptide. 8 consecutive transmembrane segments (helical) span residues 159–179 (LLGM…NQIF), 198–218 (ISVE…FILI), 226–246 (LLTS…VPPF), 253–273 (ITAF…VYYA), 278–298 (LGLA…ITFM), 333–353 (LLGT…AIIW), 356–376 (AFKS…LIFQ), and 391–411 (KSFY…YLFI).

This sequence belongs to the UbiA prenyltransferase family. Mg(2+) is required as a cofactor. In terms of tissue distribution, expressed in glandular trichomes called lupulin glands, and in early stage and mature cones. Detected in leaves, but not in root, stem and first stage of flowers. No expression in male flowers.

The protein localises to the plastid. It is found in the chloroplast membrane. It catalyses the reaction a 2-acylphloroglucinol + dimethylallyl diphosphate = a 2-acyl-4-prenylphloroglucinol + diphosphate. Its pathway is secondary metabolite biosynthesis. In terms of biological role, involved in the biosynthesis of prenylated phenolics natural products which contribute to the bitter taste of beer and display broad biological activities. Catalyzes the first prenylation step in the beta-bitter acid pathway. Abble to transfer dimethylallyl diphosphate (DMAPP) or geranyl diphosphate (GPP) to phlorisovalerophenone (PIVP), phlorisobutrylphenone (PIMP) and naringenin chalcone. Can also use phlorisobutyrophenone (PIBP) and phlormethylbutanophenone (PMBP) as substrates, but not 6'-O-methylated chalcone or naringenin. The sequence is that of 2-acylphloroglucinol 4-prenyltransferase, chloroplastic from Humulus lupulus (European hop).